The sequence spans 494 residues: Guanosine-5'-triphosphate,3'-diphosphate pyrophosphatase (494 aa).

This sequence belongs to the GppA/Ppx family. GppA subfamily.

The catalysed reaction is guanosine 3'-diphosphate 5'-triphosphate + H2O = guanosine 3',5'-bis(diphosphate) + phosphate + H(+). The protein operates within purine metabolism; ppGpp biosynthesis; ppGpp from GTP: step 2/2. Its function is as follows. Catalyzes the conversion of pppGpp to ppGpp. Guanosine pentaphosphate (pppGpp) is a cytoplasmic signaling molecule which together with ppGpp controls the 'stringent response', an adaptive process that allows bacteria to respond to amino acid starvation, resulting in the coordinated regulation of numerous cellular activities. The chain is Guanosine-5'-triphosphate,3'-diphosphate pyrophosphatase from Escherichia coli O6:H1 (strain CFT073 / ATCC 700928 / UPEC).